Here is a 294-residue protein sequence, read N- to C-terminus: 4-hydroxy-tetrahydrodipicolinate synthase (294 aa).

Pyruvate is bound at residue Thr-47. The active-site Proton donor/acceptor is the Tyr-135. Residue Lys-163 is the Schiff-base intermediate with substrate of the active site. Position 205 (Val-205) interacts with pyruvate.

This sequence belongs to the DapA family. As to quaternary structure, homotetramer; dimer of dimers.

Its subcellular location is the cytoplasm. It carries out the reaction L-aspartate 4-semialdehyde + pyruvate = (2S,4S)-4-hydroxy-2,3,4,5-tetrahydrodipicolinate + H2O + H(+). Its pathway is amino-acid biosynthesis; L-lysine biosynthesis via DAP pathway; (S)-tetrahydrodipicolinate from L-aspartate: step 3/4. In terms of biological role, catalyzes the condensation of (S)-aspartate-beta-semialdehyde [(S)-ASA] and pyruvate to 4-hydroxy-tetrahydrodipicolinate (HTPA). This is 4-hydroxy-tetrahydrodipicolinate synthase from Rickettsia bellii (strain OSU 85-389).